Here is a 247-residue protein sequence, read N- to C-terminus: Putative cyclin-T1-1 (247 aa).

This sequence belongs to the cyclin family. Cyclin T subfamily.

The chain is Putative cyclin-T1-1 (CYCT1-1) from Arabidopsis thaliana (Mouse-ear cress).